A 167-amino-acid polypeptide reads, in one-letter code: Small ribosomal subunit protein uS5 (167 aa).

An S5 DRBM domain is found at 12 to 75 (LQEKLITVNR…EQARRNMITI (64 aa)).

This sequence belongs to the universal ribosomal protein uS5 family. Part of the 30S ribosomal subunit. Contacts proteins S4 and S8.

Its function is as follows. With S4 and S12 plays an important role in translational accuracy. Functionally, located at the back of the 30S subunit body where it stabilizes the conformation of the head with respect to the body. The chain is Small ribosomal subunit protein uS5 from Buchnera aphidicola subsp. Acyrthosiphon pisum (strain APS) (Acyrthosiphon pisum symbiotic bacterium).